The sequence spans 181 residues: Inner membrane-spanning protein YciB (181 aa).

Transmembrane regions (helical) follow at residues 10 to 30, 50 to 70, 80 to 100, 118 to 138, and 148 to 168; these read LVIF…GALI, MHLI…VFHD, IIYS…KSIL, VTWY…YVAF, and FKVF…VFYL.

The protein belongs to the YciB family.

The protein localises to the cell inner membrane. In terms of biological role, plays a role in cell envelope biogenesis, maintenance of cell envelope integrity and membrane homeostasis. The protein is Inner membrane-spanning protein YciB of Shewanella baltica (strain OS223).